The sequence spans 493 residues: Probable cytosol aminopeptidase (493 aa).

Mn(2+) is bound by residues Lys259 and Asp264. Lys271 is an active-site residue. Mn(2+)-binding residues include Asp282, Asp341, and Glu343. Arg345 is an active-site residue.

The protein belongs to the peptidase M17 family. Mn(2+) serves as cofactor.

The protein resides in the cytoplasm. The catalysed reaction is Release of an N-terminal amino acid, Xaa-|-Yaa-, in which Xaa is preferably Leu, but may be other amino acids including Pro although not Arg or Lys, and Yaa may be Pro. Amino acid amides and methyl esters are also readily hydrolyzed, but rates on arylamides are exceedingly low.. It carries out the reaction Release of an N-terminal amino acid, preferentially leucine, but not glutamic or aspartic acids.. In terms of biological role, presumably involved in the processing and regular turnover of intracellular proteins. Catalyzes the removal of unsubstituted N-terminal amino acids from various peptides. This Bacillus cytotoxicus (strain DSM 22905 / CIP 110041 / 391-98 / NVH 391-98) protein is Probable cytosol aminopeptidase.